The chain runs to 360 residues: uncharacterized protein (360 aa).

The next 7 helical transmembrane spans lie at 26–48 (SVCYLGSACVSVAVVCVVWSGAT), 58–80 (LHPLTSASFSTAIFTFVMCASVL), 89–111 (VMGLRAELAITAAILTLGHNIAH), 126–148 (LSTGFLVAGAVSMVLVLLMSILA), 169–191 (RLAYLFYGLTYVHLSFILLPTAL), 195–214 (IPSVVSYVLYTVIFATYALL), and 227–249 (CALCSAAVAVSFVAFVLGASHMV).

The protein resides in the cell membrane. This is an uncharacterized protein from Treponema pallidum (strain Nichols).